Reading from the N-terminus, the 362-residue chain is Ribosome-binding ATPase YchF (362 aa).

The 253-residue stretch at F3–M255 folds into the OBG-type G domain. Position 12 to 17 (N12 to T17) interacts with ATP. Mg(2+) is bound by residues S16 and T36. Residues N277–F360 form the TGS domain.

It belongs to the TRAFAC class OBG-HflX-like GTPase superfamily. OBG GTPase family. YchF/OLA1 subfamily. Mg(2+) serves as cofactor.

Its function is as follows. ATPase that binds to both the 70S ribosome and the 50S ribosomal subunit in a nucleotide-independent manner. The sequence is that of Ribosome-binding ATPase YchF from Buchnera aphidicola subsp. Acyrthosiphon pisum (strain APS) (Acyrthosiphon pisum symbiotic bacterium).